The primary structure comprises 385 residues: MRRIFLFDENSLNSSSTIDTSSASTIDTSFASQCTNFSSGQASGTQDTHAGIFEDCPGLNPNDERVVELQCEIREKCEALTQDPEMGLILGEALHAESDNVPFLQSIADDLTQNGVSGEAFQEALNIVGQAAASPLDQFEIVPLIPMHIGNFYFSFTNSSLFMLLTLSFFLLLIHFVTKKGGGNLVPNAWQSLVELLYDFVLNLVKEQIGGLSGNVKQMFFPCILVTFLFLLFCNLQGMIPYSFTVTSHFLITLALSFSIFIGITIVGFQRHGLHFFSFLLPAGVPLPLAPFLVLLELISYCFRALSLGIRLFANMMAGHSLVKILSGFAWTMLCMNDIFYFIGALGPLFIVLALTGLELGVAILQAYVFTILICIYLNDAINLH.

A propeptide spanning residues 1–133 is cleaved from the precursor; sequence MRRIFLFDEN…ALNIVGQAAA (133 aa). Helical transmembrane passes span 154–174, 220–240, 249–269, 276–296, 316–336, 339–359, and 362–382; these read FSFT…LLLI, FFPC…QGMI, HFLI…IVGF, FFSF…LVLL, MMAG…MLCM, IFYF…TGLE, and VAIL…NDAI.

It belongs to the ATPase A chain family. In terms of assembly, F-type ATPases have 2 components, CF(1) - the catalytic core - and CF(0) - the membrane proton channel. CF(1) has five subunits: alpha(3), beta(3), gamma(1), delta(1), epsilon(1). CF(0) has three main subunits: a, b and c.

It localises to the mitochondrion inner membrane. Functionally, mitochondrial membrane ATP synthase (F(1)F(0) ATP synthase or Complex V) produces ATP from ADP in the presence of a proton gradient across the membrane which is generated by electron transport complexes of the respiratory chain. F-type ATPases consist of two structural domains, F(1) - containing the extramembraneous catalytic core and F(0) - containing the membrane proton channel, linked together by a central stalk and a peripheral stalk. During catalysis, ATP synthesis in the catalytic domain of F(1) is coupled via a rotary mechanism of the central stalk subunits to proton translocation. Key component of the proton channel; it may play a direct role in the translocation of protons across the membrane. This chain is ATP synthase subunit a-1 (ATP6-1), found in Arabidopsis thaliana (Mouse-ear cress).